A 940-amino-acid chain; its full sequence is Isoleucine--tRNA ligase (940 aa).

Residues Pro-58–His-68 carry the 'HIGH' region motif. L-isoleucyl-5'-AMP is bound at residue Glu-564. The short motif at Lys-605–Ser-609 is the 'KMSKS' region element. Lys-608 provides a ligand contact to ATP. Residues Cys-903, Cys-906, Cys-923, and Cys-926 each coordinate Zn(2+).

Belongs to the class-I aminoacyl-tRNA synthetase family. IleS type 1 subfamily. In terms of assembly, monomer. Zn(2+) serves as cofactor.

The protein resides in the cytoplasm. The enzyme catalyses tRNA(Ile) + L-isoleucine + ATP = L-isoleucyl-tRNA(Ile) + AMP + diphosphate. In terms of biological role, catalyzes the attachment of isoleucine to tRNA(Ile). As IleRS can inadvertently accommodate and process structurally similar amino acids such as valine, to avoid such errors it has two additional distinct tRNA(Ile)-dependent editing activities. One activity is designated as 'pretransfer' editing and involves the hydrolysis of activated Val-AMP. The other activity is designated 'posttransfer' editing and involves deacylation of mischarged Val-tRNA(Ile). This chain is Isoleucine--tRNA ligase, found in Shewanella baltica (strain OS155 / ATCC BAA-1091).